A 284-amino-acid polypeptide reads, in one-letter code: 4-diphosphocytidyl-2-C-methyl-D-erythritol kinase (284 aa).

The active site involves Lys-14. 98–108 lines the ATP pocket; the sequence is PMGGGLGGGSS. The active site involves Asp-140.

It belongs to the GHMP kinase family. IspE subfamily.

The enzyme catalyses 4-CDP-2-C-methyl-D-erythritol + ATP = 4-CDP-2-C-methyl-D-erythritol 2-phosphate + ADP + H(+). It functions in the pathway isoprenoid biosynthesis; isopentenyl diphosphate biosynthesis via DXP pathway; isopentenyl diphosphate from 1-deoxy-D-xylulose 5-phosphate: step 3/6. In terms of biological role, catalyzes the phosphorylation of the position 2 hydroxy group of 4-diphosphocytidyl-2C-methyl-D-erythritol. The protein is 4-diphosphocytidyl-2-C-methyl-D-erythritol kinase of Shewanella baltica (strain OS155 / ATCC BAA-1091).